A 436-amino-acid chain; its full sequence is Trigger factor (436 aa).

The PPIase FKBP-type domain occupies 161–246 (EDQLNIDFVG…VNTVSEPKLP (86 aa)).

This sequence belongs to the FKBP-type PPIase family. Tig subfamily.

It is found in the cytoplasm. The enzyme catalyses [protein]-peptidylproline (omega=180) = [protein]-peptidylproline (omega=0). Functionally, involved in protein export. Acts as a chaperone by maintaining the newly synthesized protein in an open conformation. Functions as a peptidyl-prolyl cis-trans isomerase. The sequence is that of Trigger factor from Pseudomonas savastanoi pv. phaseolicola (strain 1448A / Race 6) (Pseudomonas syringae pv. phaseolicola (strain 1448A / Race 6)).